The sequence spans 260 residues: MYVIQINKATKTYNNGTIAVHPTSLNFEPGTFNAILGPSGAGKSTLLRMINGLEIPTTGEIIIQGQTLTAKNLRQVRSRTAMVFQQFNLVGRLNVMTNILTGRLYYIPWWSSILYMFGQRDWKIAQWALNRVSLKEKAWERVDRLSGGQQQRVGVARALAQRPEVILADEPVASLDPIASEEIMELLREICRQDGITIVANLHQVSLALRYADRVIGLNKGRVVFDDSPQALSNNKNTLRTIYQREDGSVDDTLEMAVTD.

Positions 4–245 constitute an ABC transporter domain; the sequence is IQINKATKTY…KNTLRTIYQR (242 aa). 37–44 is an ATP binding site; sequence GPSGAGKS.

The protein belongs to the ABC transporter superfamily. Phosphonates importer (TC 3.A.1.9.1) family. As to quaternary structure, the complex is composed of two ATP-binding proteins (PhnC), two transmembrane proteins (PhnE) and a solute-binding protein (PhnD).

It is found in the cell inner membrane. It catalyses the reaction phosphonate(out) + ATP + H2O = phosphonate(in) + ADP + phosphate + H(+). Its function is as follows. Part of the ABC transporter complex PhnCDE involved in phosphonates import. Responsible for energy coupling to the transport system. The protein is Phosphonates import ATP-binding protein PhnC 2 of Trichodesmium erythraeum (strain IMS101).